Reading from the N-terminus, the 498-residue chain is MRINPTTSGSGVSTLEKKNPGRVVQIIGPVLDVAFPPGKMPNIYNALVVQGRDSVGQPINVACEVQQLLGNNRVRAVAMSATDGLTRGMAVIDTGAPISVPVGGATLGRIFNVLGEPVDNLGPVDTSTTSPIHRSAPAFIQLDTKLSIFETGIKVVDLLAPYRRGGKIGLFGGAGVGKTVLIMELINNIAKAHGGVSVFGGVGERTREGNDLYMEMKESGVINKENIAESKVALVYGQMNEPPGARMRVGLTALTMAEYFRDVNEQDVLLFIDNIFRFVQAGSEVSALLGRMPSAVGYQPTLSTEMGSLQERITSTKDGSITSIQAVYVPADDLTDPAPATTFAHLDATTVLSRGLAAKGIYPAVDPLDSTSTMLQPRIVGEEHYETAQRVKQTLQRYKELQDIIAILGLDELSEEDRLLVARARKIERFLSQPFFVAEVFTGSPGKYVGLAETIRGFQLILSGELDGLPEQAFYLVGTIDEATAKAMNLEMESNLKK.

Residue 172 to 179 (GGAGVGKT) participates in ATP binding.

Belongs to the ATPase alpha/beta chains family. As to quaternary structure, F-type ATPases have 2 components, CF(1) - the catalytic core - and CF(0) - the membrane proton channel. CF(1) has five subunits: alpha(3), beta(3), gamma(1), delta(1), epsilon(1). CF(0) has four main subunits: a(1), b(1), b'(1) and c(9-12).

It is found in the plastid. The protein resides in the chloroplast thylakoid membrane. It catalyses the reaction ATP + H2O + 4 H(+)(in) = ADP + phosphate + 5 H(+)(out). Produces ATP from ADP in the presence of a proton gradient across the membrane. The catalytic sites are hosted primarily by the beta subunits. In Solanum bulbocastanum (Wild potato), this protein is ATP synthase subunit beta, chloroplastic.